Here is a 146-residue protein sequence, read N- to C-terminus: Large-conductance mechanosensitive channel (146 aa).

Helical transmembrane passes span 17–37 (IDLA…DSLV), 40–60 (IIMP…QKFV), and 89–109 (LTIL…VKLI).

The protein belongs to the MscL family. Homopentamer.

The protein localises to the cell inner membrane. Functionally, channel that opens in response to stretch forces in the membrane lipid bilayer. May participate in the regulation of osmotic pressure changes within the cell. This is Large-conductance mechanosensitive channel from Acinetobacter baylyi (strain ATCC 33305 / BD413 / ADP1).